Here is a 715-residue protein sequence, read N- to C-terminus: SEC14-like protein 1 (715 aa).

The required for interaction and inhibitory function toward RIGI stretch occupies residues Met-1–Glu-510. The 173-residue stretch at Gln-3 to Ile-175 folds into the PRELI/MSF1 domain. Phosphothreonine is present on Thr-234. One can recognise a CRAL-TRIO domain in the interval Pro-319 to Val-495. One can recognise a GOLD domain in the interval Thr-521–Val-674. At Ser-586 the chain carries Phosphoserine.

In terms of assembly, interacts with RIGI (via tandem CARD domain); the interaction is direct. Interacts (via GOLD domain) with SLC18A3; the interaction is direct. Interacts with SLC5A7 (via GOLD domain); the interaction is direct.

The protein resides in the cytoplasm. Its subcellular location is the golgi apparatus. Its function is as follows. May play a role in innate immunity by inhibiting the antiviral RIG-I signaling pathway. In this pathway, functions as a negative regulator of RIGI, the cytoplasmic sensor of viral nucleic acids. Prevents the interaction of RIGI with MAVS/IPS1, an important step in signal propagation. May also regulate the SLC18A3 and SLC5A7 cholinergic transporters. In Mus musculus (Mouse), this protein is SEC14-like protein 1.